Here is a 482-residue protein sequence, read N- to C-terminus: tRNA(Ile)-lysidine synthase (482 aa).

28–33 contacts ATP; the sequence is SGGPDS.

The protein belongs to the tRNA(Ile)-lysidine synthase family.

It is found in the cytoplasm. The enzyme catalyses cytidine(34) in tRNA(Ile2) + L-lysine + ATP = lysidine(34) in tRNA(Ile2) + AMP + diphosphate + H(+). In terms of biological role, ligates lysine onto the cytidine present at position 34 of the AUA codon-specific tRNA(Ile) that contains the anticodon CAU, in an ATP-dependent manner. Cytidine is converted to lysidine, thus changing the amino acid specificity of the tRNA from methionine to isoleucine. The protein is tRNA(Ile)-lysidine synthase of Symbiobacterium thermophilum (strain DSM 24528 / JCM 14929 / IAM 14863 / T).